The following is a 185-amino-acid chain: Photosystem I assembly protein Ycf4 (185 aa).

Helical transmembrane passes span 24–44 (YIIGGMLTIGGIGFLLASISS) and 66–86 (IIMGAYGVVANLLNFYLWYMV).

This sequence belongs to the Ycf4 family.

The protein resides in the cellular thylakoid membrane. Its function is as follows. Seems to be required for the assembly of the photosystem I complex. In Prochlorococcus marinus (strain MIT 9312), this protein is Photosystem I assembly protein Ycf4.